A 289-amino-acid chain; its full sequence is Oxaloacetate decarboxylase 1 (289 aa).

S50 contacts substrate. Residue D88 participates in Mg(2+) binding. 2 residues coordinate substrate: R159 and H235.

Belongs to the isocitrate lyase/PEP mutase superfamily. Oxaloacetate decarboxylase family. As to quaternary structure, homotetramer; dimer of dimers. Mg(2+) is required as a cofactor.

It catalyses the reaction oxaloacetate + H(+) = pyruvate + CO2. Functionally, catalyzes the decarboxylation of oxaloacetate into pyruvate. Seems to play a role in maintaining cellular concentrations of bicarbonate and pyruvate. This chain is Oxaloacetate decarboxylase 1, found in Pseudomonas fluorescens (strain Pf0-1).